Here is a 266-residue protein sequence, read N- to C-terminus: Hydroxyethylthiazole kinase (266 aa).

A substrate-binding site is contributed by Met-43. The ATP site is built by Arg-119 and Thr-166. Residue Gly-193 coordinates substrate.

It belongs to the Thz kinase family. Mg(2+) serves as cofactor.

It carries out the reaction 5-(2-hydroxyethyl)-4-methylthiazole + ATP = 4-methyl-5-(2-phosphooxyethyl)-thiazole + ADP + H(+). It functions in the pathway cofactor biosynthesis; thiamine diphosphate biosynthesis; 4-methyl-5-(2-phosphoethyl)-thiazole from 5-(2-hydroxyethyl)-4-methylthiazole: step 1/1. In terms of biological role, catalyzes the phosphorylation of the hydroxyl group of 4-methyl-5-beta-hydroxyethylthiazole (THZ). This Methanococcus maripaludis (strain DSM 14266 / JCM 13030 / NBRC 101832 / S2 / LL) protein is Hydroxyethylthiazole kinase.